Consider the following 111-residue polypeptide: Cytochrome c (111 aa).

Residue A1 is modified to N-acetylalanine. C22, C25, and H26 together coordinate heme c. N6,N6,N6-trimethyllysine is present on K80. Residue M88 participates in heme c binding. K94 is subject to N6,N6,N6-trimethyllysine.

The protein belongs to the cytochrome c family. Binds 1 heme c group covalently per subunit.

The protein resides in the mitochondrion intermembrane space. Functionally, electron carrier protein. The oxidized form of the cytochrome c heme group can accept an electron from the heme group of the cytochrome c1 subunit of cytochrome reductase. Cytochrome c then transfers this electron to the cytochrome oxidase complex, the final protein carrier in the mitochondrial electron-transport chain. This chain is Cytochrome c, found in Guizotia abyssinica (Niger).